Consider the following 195-residue polypeptide: Granulocyte colony-stimulating factor (195 aa).

A signal peptide spans 1–21 (MKLMALQLLLWHIALWMVPEA). Disulfide bonds link Cys57/Cys63 and Cys85/Cys95. A glycan (O-linked (GalNAc...) threonine) is linked at Thr154.

It belongs to the IL-6 superfamily. Monomer. In terms of processing, O-glycosylated.

Its subcellular location is the secreted. In terms of biological role, granulocyte/macrophage colony-stimulating factors are cytokines that act in hematopoiesis by controlling the production, differentiation, and function of 2 related white cell populations of the blood, the granulocytes and the monocytes-macrophages. This CSF induces granulocytes. The chain is Granulocyte colony-stimulating factor (CSF3) from Sus scrofa (Pig).